We begin with the raw amino-acid sequence, 401 residues long: S-adenosylmethionine synthase 1 (401 aa).

H15 serves as a coordination point for ATP. D17 is a binding site for Mg(2+). K(+) is bound at residue E43. L-methionine is bound by residues E56 and Q98. Positions 98–108 are flexible loop; it reads QSPDIAQGVDK. Residues 173–175, 246–247, D255, 261–262, A278, and K282 each bind ATP; these read DGK, RF, and RK. An L-methionine-binding site is contributed by D255. K286 lines the L-methionine pocket.

The protein belongs to the AdoMet synthase family. In terms of assembly, homotetramer; dimer of dimers. Mg(2+) is required as a cofactor. Requires K(+) as cofactor.

The protein localises to the cytoplasm. The catalysed reaction is L-methionine + ATP + H2O = S-adenosyl-L-methionine + phosphate + diphosphate. The protein operates within amino-acid biosynthesis; S-adenosyl-L-methionine biosynthesis; S-adenosyl-L-methionine from L-methionine: step 1/1. Functionally, catalyzes the formation of S-adenosylmethionine (AdoMet) from methionine and ATP. The overall synthetic reaction is composed of two sequential steps, AdoMet formation and the subsequent tripolyphosphate hydrolysis which occurs prior to release of AdoMet from the enzyme. The chain is S-adenosylmethionine synthase 1 from Frankia casuarinae (strain DSM 45818 / CECT 9043 / HFP020203 / CcI3).